The following is a 664-amino-acid chain: Prelamin-A/C (664 aa).

Position 1 is an N-acetylmethionine (methionine 1). The tract at residues 1–25 (METPSQRRATRSGAQASSTPLSPTR) is disordered. The tract at residues 1 to 33 (METPSQRRATRSGAQASSTPLSPTRITRLQEKE) is head. An interaction with MLIP region spans residues 1 to 130 (METPSQRRAT…TKKEGDLIAA (130 aa)). Phosphothreonine is present on threonine 3. Serine 5 is subject to Phosphoserine. Threonine 10 carries the phosphothreonine modification. Phosphoserine occurs at positions 12 and 18. Residue threonine 19 is modified to Phosphothreonine. Phosphoserine; by CDK1 is present on serine 22. The IF rod domain maps to 31–387 (EKEDLQELND…KLLEGEEERL (357 aa)). An N6-acetyllysine; alternate modification is found at lysine 32. The residue at position 32 (lysine 32) is an N6-succinyllysine; alternate. Residue lysine 32 forms a Glycyl lysine isopeptide (Lys-Gly) (interchain with G-Cter in SUMO2); alternate linkage. Residues 34-70 (DLQELNDRLAVYIDRVRSLETENAGLRLRITESEEVV) are coil 1A. Phosphoserine is present on residues serine 51, serine 66, and serine 71. The tract at residues 71–80 (SREVSGIKAA) is linker 1. Residues lysine 78 and lysine 97 each carry the N6-acetyllysine modification. The tract at residues 81–218 (YEAELGDARK…NIYSEELRET (138 aa)) is coil 1B. Lysine 97 participates in a covalent cross-link: Glycyl lysine isopeptide (Lys-Gly) (interchain with G-Cter in SUMO2). A Phosphoserine modification is found at serine 107. 6 positions are modified to N6-acetyllysine: lysine 108, lysine 114, lysine 123, lysine 135, lysine 144, and lysine 155. N6-acetyllysine; alternate is present on lysine 171. N6-succinyllysine; alternate is present on lysine 171. A Glycyl lysine isopeptide (Lys-Gly) (interchain with G-Cter in SUMO2); alternate cross-link involves residue lysine 171. Residues lysine 180, lysine 201, and lysine 208 each carry the N6-acetyllysine modification. A Glycyl lysine isopeptide (Lys-Gly) (interchain with G-Cter in SUMO2); alternate cross-link involves residue lysine 201. Lysine 201 participates in a covalent cross-link: Glycyl lysine isopeptide (Lys-Gly) (interchain with G-Cter in SUMO); alternate. Lysine 208 is covalently cross-linked (Glycyl lysine isopeptide (Lys-Gly) (interchain with G-Cter in SUMO2)). Serine 212 bears the Phosphoserine mark. Glycyl lysine isopeptide (Lys-Gly) (interchain with G-Cter in SUMO2) cross-links involve residues lysine 219 and lysine 233. The interval 219–242 (KRRHETRLVEIDNGKQREFESRLA) is linker 2. N6-acetyllysine is present on residues lysine 233, lysine 260, lysine 265, and lysine 270. The tract at residues 243-383 (DALQELRAQH…HAYRKLLEGE (141 aa)) is coil 2. Residues 259-331 (YKKELEKTYS…DLEDSLARER (73 aa)) form a necessary and sufficient for the interaction with IFFO1 region. Residue lysine 260 forms a Glycyl lysine isopeptide (Lys-Gly) (interchain with G-Cter in SUMO2); alternate linkage. Lysine 270 participates in a covalent cross-link: Glycyl lysine isopeptide (Lys-Gly) (interchain with G-Cter in SUMO2); alternate. Phosphoserine is present on serine 277. Serine 282 bears the Phosphoserine; by ATR mark. Phosphoserine is present on residues serine 301 and serine 307. A Glycyl lysine isopeptide (Lys-Gly) (interchain with G-Cter in SUMO2); alternate cross-link involves residue lysine 311. Residues lysine 311, lysine 316, and lysine 341 each carry the N6-acetyllysine modification. Glycyl lysine isopeptide (Lys-Gly) (interchain with G-Cter in SUMO2) cross-links involve residues lysine 366 and lysine 378. The segment at 384-442 (EERLRLSPSPTSQRSRGRASSHSSQTQGGGSVTKKRKLESTESRSSFSQHARTSGRVAV) is disordered. The interval 384 to 664 (EERLRLSPSP…TQSPQNCSIM (281 aa)) is tail. Serine 390 carries the phosphoserine modification. Position 392 is a phosphoserine; by CDK1 (serine 392). The residue at position 395 (serine 395) is a Phosphoserine; by ATR. 6 positions are modified to phosphoserine: serine 398, serine 403, serine 404, serine 406, serine 407, and serine 414. A Phosphothreonine modification is found at threonine 416. An N6-acetyllysine modification is found at lysine 417. Glycyl lysine isopeptide (Lys-Gly) (interchain with G-Cter in SUMO2) cross-links involve residues lysine 417 and lysine 420. The Nuclear localization signal signature appears at 417–422 (KKRKLE). Phosphoserine occurs at positions 423, 426, 429, and 431. Over residues 426–435 (SRSSFSQHAR) the composition is skewed to polar residues. The LTD domain maps to 428-545 (SSFSQHARTS…EEVAMRKLVR (118 aa)). Residue lysine 450 forms a Glycyl lysine isopeptide (Lys-Gly) (interchain with G-Cter in SUMO2); alternate linkage. Residues lysine 450 and lysine 457 each carry the N6-acetyllysine modification. Residues serine 458 and serine 463 each carry the phosphoserine modification. Residues lysine 470 and lysine 486 each participate in a glycyl lysine isopeptide (Lys-Gly) (interchain with G-Cter in SUMO2) cross-link. Lysine 486 is subject to N6-acetyllysine. Residues threonine 496, threonine 505, and threonine 510 each carry the phosphothreonine modification. 2 positions are modified to phosphoserine: serine 533 and serine 546. At threonine 548 the chain carries Phosphothreonine. Residues 552 to 576 (DDEDEDGDDLLHHHHGSHCSSSGDP) form a disordered region. Phosphoserine occurs at positions 568 and 571. Lysine 597 is covalently cross-linked (Glycyl lysine isopeptide (Lys-Gly) (interchain with G-Cter in SUMO2); alternate). Lysine 597 is covalently cross-linked (Glycyl lysine isopeptide (Lys-Gly) (interchain with G-Cter in SUMO1); alternate). The interval 598–619 (ASASGSGAQVGGPISSGSSASS) is disordered. Phosphoserine is present on residues serine 612, serine 613, serine 616, and serine 619. Residues serine 625 and serine 628 are each glycosylated (O-linked (GlcNAc) serine). A phosphoserine mark is found at serine 628, serine 632, serine 636, and serine 652. Positions 647-661 (LLGNSSPRTQSPQNC) are cleaved as a propeptide — removed in Lamin-A/C form. The residue at position 661 (cysteine 661) is a Cysteine methyl ester. Cysteine 661 carries S-farnesyl cysteine lipidation. The propeptide at 662 to 664 (SIM) is removed in Prelamin-A/C form and in Lamin-A/C form.

The protein belongs to the intermediate filament family. In terms of assembly, homodimer of lamin A and lamin C. Lamin dimers then assemble into dimeric head-to-tail polymers. Ultimately, two head-to-tail polymers assemble laterally into a protofilament with a uniformly shaped rod of 3.5 nm in diameter. Interacts with lamin-associated polypeptides IA, IB and TMPO-alpha, RB1 and with emerin. Interacts with SREBF1, SREBF2, SUN2 and TMEM43. Interacts with TMEM201. Proteolytically processed isoform A interacts with NARF. Interacts with SUN1. Interacts with MLIP. Interacts with DMPK; may regulate nuclear envelope stability. Interacts with SUV39H1; the interaction increases stability of SUV39H1. Interacts with SYNE2. Interacts with ITSN1 isoform 2. Interacts with IFFO1; enables the formation of an interior nucleoskeleton that is recruited to DNA double-strand breaks. Interacts with EMD. As to quaternary structure, interacts (via C-terminus) with LEMD2 (via N-terminus) (in vitro). Post-translationally, proteolytic cleavage of the C-terminal of 18 residues of prelamin-A/C results in the production of lamin-A/C. The prelamin-A/C maturation pathway includes farnesylation of CAAX motif by protein farnesyltransferase (FNTA and FNTB), removal of the last three amino acids (-AAX) by RCE1/FACE2 and/or ZMPSTE24, methylation of the C-terminal cysteine by ICMT and endoproteolytic removal of the last 15 C-terminal amino acids by ZMPSTE24. Proteolytic cleavage requires prior farnesylation and methylation, and absence of these blocks cleavage. Farnesylation of prelamin-A/C facilitates nuclear envelope targeting. In terms of processing, phosphorylation plays a key role in lamin organization, subcellular localization and nuclear envelope disintegration. Phosphorylation by CDK1 at Ser-22 and Ser-392 at the onset of mitosis drives lamin disassembly and nuclear envelope breakdown. Phosphorylation at Ser-22 and Ser-392 during interphase promotes localization to the nucleoplasm and regulates lamina assembly. Phosphorylation at Ser-22, Ser-392 and Ser-628 during interphase causes redistribution between the nucleus and the cytoplasm. Phosphorylation at Ser-22 by CDK1 regulates matrix stiffness. Phosphorylation status of Ser-22 determines its localization between double-strand break (DSB) sites and the nuclear matrix. Phosphorylated by ATR at Ser-282 in response to DNA damage, leading to lamin disassembly and nuclear envelope rupture. Phosphorylation also regulates stability in micronuclei arising from genome instability: phosphorylation at Ser-395 by ATR in response to genome instability and double-stranded DNA breaks primes LMNA for subsequent phosphorylation at Ser-392 by CDK1 and micronuclei envelope rupture. The rupture of micronuclear envelope triggers the cGAS-STING pathway thereby activating the type I interferon response and innate immunity. Post-translationally, acetylation by KAT8 is required for nuclear architecture. Sumoylation is necessary for the localization to the nuclear envelope. In terms of tissue distribution, in the arteries, prelamin-A/C accumulation is not observed in young healthy vessels but is prevalent in medial vascular smooth muscle cells (VSMCs) from aged individuals and in atherosclerotic lesions, where it often colocalizes with senescent and degenerate VSMCs. Prelamin-A/C expression increases with age and disease. In normal aging, the accumulation of prelamin-A/C is caused in part by the down-regulation of ZMPSTE24/FACE1 in response to oxidative stress.

Its subcellular location is the nucleus lamina. It is found in the nucleus envelope. The protein resides in the nucleus. The protein localises to the nucleoplasm. It localises to the nucleus matrix. Its subcellular location is the nucleus speckle. Lamins are intermediate filament proteins that assemble into a filamentous meshwork, and which constitute the major components of the nuclear lamina, a fibrous layer on the nucleoplasmic side of the inner nuclear membrane. Lamins provide a framework for the nuclear envelope, bridging the nuclear envelope and chromatin, thereby playing an important role in nuclear assembly, chromatin organization, nuclear membrane and telomere dynamics. Lamin A and C also regulate matrix stiffness by conferring nuclear mechanical properties. The structural integrity of the lamina is strictly controlled by the cell cycle, as seen by the disintegration and formation of the nuclear envelope in prophase and telophase, respectively. Lamin A and C are present in equal amounts in the lamina of mammals. Also invoved in DNA repair: recruited by DNA repair proteins XRCC4 and IFFO1 to the DNA double-strand breaks (DSBs) to prevent chromosome translocation by immobilizing broken DNA ends. Required for normal development of peripheral nervous system and skeletal muscle and for muscle satellite cell proliferation. Required for osteoblastogenesis and bone formation. Also prevents fat infiltration of muscle and bone marrow, helping to maintain the volume and strength of skeletal muscle and bone. Required for cardiac homeostasis. Functionally, prelamin-A/C can accelerate smooth muscle cell senescence. It acts to disrupt mitosis and induce DNA damage in vascular smooth muscle cells (VSMCs), leading to mitotic failure, genomic instability, and premature senescence. In Homo sapiens (Human), this protein is Prelamin-A/C (LMNA).